A 1049-amino-acid chain; its full sequence is Vacuolar membrane protease (1049 aa).

Residues 1–11 lie on the Cytoplasmic side of the membrane; the sequence is MKCYNPSAFVP. The helical transmembrane segment at 12–32 threads the bilayer; sequence MAVTLVTVIIYLGVFIPLLII. Topologically, residues 33–438 are vacuolar; it reads QETVPSAPDD…TVFAVFKLRT (406 aa). A glycan (N-linked (GlcNAc...) asparagine) is linked at asparagine 50. Residues 114–135 form a disordered region; the sequence is DAEAPESVPSPSNSNDGSAERY. N-linked (GlcNAc...) asparagine glycosylation is present at asparagine 157. The Zn(2+) site is built by histidine 221 and aspartate 233. Residue glutamate 267 is the Proton acceptor of the active site. Zn(2+) is bound by residues glutamate 268, glutamate 293, and histidine 365. A helical membrane pass occupies residues 439 to 459; the sequence is LFAWSLTLLIAAPLMLFAVSY. Residues 460–495 are Cytoplasmic-facing; that stretch reads LLNRQDKFYFFAGSIKAKGPEDEPISLGGWRGAFRY. A helical membrane pass occupies residues 496–516; the sequence is PITLIITCAITFGCASLINKI. Residues 517–526 are Vacuolar-facing; that stretch reads NPMIVYSSPY. Residues 527–547 form a helical membrane-spanning segment; the sequence is SVWSMSASLFFSIFWFIMAGC. Over 548 to 557 the chain is Cytoplasmic; that stretch reads NFVRPSALQR. The helical transmembrane segment at 558–578 threads the bilayer; that stretch reads GYAFMWLFVFGWIILVAATVY. The Vacuolar portion of the chain corresponds to 579–585; sequence EDRFKIS. Residues 586 to 606 form a helical membrane-spanning segment; that stretch reads GGYLFVFYEAAIFLATLIAIG. Residues 607–740 are Cytoplasmic-facing; sequence EQFALPKKST…LPIWTWLVQY (134 aa). Residues 621–686 are disordered; sequence SQLDHDGNQD…IGGGAPTQRS (66 aa). The segment covering 622–633 has biased composition (basic and acidic residues); that stretch reads QLDHDGNQDSHH. Acidic residues predominate over residues 655–664; the sequence is GQEEDPEDNV. The helical transmembrane segment at 741–761 threads the bilayer; it reads LLVGPFILIVVGQVGLFLVAA. The Vacuolar segment spans residues 762–773; sequence LHQTGTDGSPLL. The chain crosses the membrane as a helical span at residues 774–794; sequence LPYLVVAVFSILLLLPVTPFI. Over 795 to 801 the chain is Cytoplasmic; sequence HRLTHHM. Residues 802 to 822 form a helical membrane-spanning segment; the sequence is PTFFFLVFIGTLIYNLVAFPF. The Vacuolar segment spans residues 823–1049; sequence SPNNRYKAYF…LVEGSKRFVV (227 aa). An N-linked (GlcNAc...) asparagine glycan is attached at asparagine 914.

This sequence belongs to the peptidase M28 family. It depends on Zn(2+) as a cofactor.

It is found in the vacuole membrane. May be involved in vacuolar sorting and osmoregulation. This chain is Vacuolar membrane protease, found in Botryotinia fuckeliana (strain B05.10) (Noble rot fungus).